A 169-amino-acid chain; its full sequence is ATP synthase subunit b (169 aa).

The helical transmembrane segment at Ile-11–Phe-31 threads the bilayer.

It belongs to the ATPase B chain family. As to quaternary structure, F-type ATPases have 2 components, F(1) - the catalytic core - and F(0) - the membrane proton channel. F(1) has five subunits: alpha(3), beta(3), gamma(1), delta(1), epsilon(1). F(0) has three main subunits: a(1), b(2) and c(10-14). The alpha and beta chains form an alternating ring which encloses part of the gamma chain. F(1) is attached to F(0) by a central stalk formed by the gamma and epsilon chains, while a peripheral stalk is formed by the delta and b chains.

The protein resides in the cell membrane. Functionally, f(1)F(0) ATP synthase produces ATP from ADP in the presence of a proton or sodium gradient. F-type ATPases consist of two structural domains, F(1) containing the extramembraneous catalytic core and F(0) containing the membrane proton channel, linked together by a central stalk and a peripheral stalk. During catalysis, ATP synthesis in the catalytic domain of F(1) is coupled via a rotary mechanism of the central stalk subunits to proton translocation. Component of the F(0) channel, it forms part of the peripheral stalk, linking F(1) to F(0). In Dehalococcoides mccartyi (strain ATCC BAA-2100 / JCM 16839 / KCTC 5957 / BAV1), this protein is ATP synthase subunit b.